The following is a 397-amino-acid chain: Ribosomal RNA large subunit methyltransferase I (397 aa).

The PUA domain maps to 2 to 79 (SASIYLVKGR…KEETVDLDFF (78 aa)).

This sequence belongs to the methyltransferase superfamily. RlmI family.

The protein localises to the cytoplasm. The enzyme catalyses cytidine(1962) in 23S rRNA + S-adenosyl-L-methionine = 5-methylcytidine(1962) in 23S rRNA + S-adenosyl-L-homocysteine + H(+). Its function is as follows. Specifically methylates the cytosine at position 1962 (m5C1962) of 23S rRNA. This Aeromonas hydrophila subsp. hydrophila (strain ATCC 7966 / DSM 30187 / BCRC 13018 / CCUG 14551 / JCM 1027 / KCTC 2358 / NCIMB 9240 / NCTC 8049) protein is Ribosomal RNA large subunit methyltransferase I.